The sequence spans 137 residues: Small ribosomal subunit protein uS11A (137 aa).

Residue Ser2 is modified to N-acetylserine. The disordered stretch occupies residues 117 to 137; that stretch reads DVTPVPSDSTRKKGGRRGRRL. Positions 128 to 137 are enriched in basic residues; sequence KKGGRRGRRL.

Belongs to the universal ribosomal protein uS11 family. In terms of assembly, component of the small ribosomal subunit (SSU). Mature yeast ribosomes consist of a small (40S) and a large (60S) subunit. The 40S small subunit contains 1 molecule of ribosomal RNA (18S rRNA) and 33 different proteins (encoded by 57 genes). The large 60S subunit contains 3 rRNA molecules (25S, 5.8S and 5S rRNA) and 46 different proteins (encoded by 81 genes). uS11 interacts with eS1 forming part of the mRNA exit tunnel. uS11 interacts with snoRNA U3. uS11 interacts with MPP10. Component of the ribosomal small subunit (SSU) processome composed of at least 40 protein subunits and snoRNA U3. N-terminally acetylated by acetyltransferase NatA.

The protein localises to the cytoplasm. It is found in the nucleus. The protein resides in the nucleolus. Its function is as follows. Component of the ribosome, a large ribonucleoprotein complex responsible for the synthesis of proteins in the cell. The small ribosomal subunit (SSU) binds messenger RNAs (mRNAs) and translates the encoded message by selecting cognate aminoacyl-transfer RNA (tRNA) molecules. The large subunit (LSU) contains the ribosomal catalytic site termed the peptidyl transferase center (PTC), which catalyzes the formation of peptide bonds, thereby polymerizing the amino acids delivered by tRNAs into a polypeptide chain. The nascent polypeptides leave the ribosome through a tunnel in the LSU and interact with protein factors that function in enzymatic processing, targeting, and the membrane insertion of nascent chains at the exit of the ribosomal tunnel. uS11 is involved in nucleolar processing of pre-18S ribosomal RNA and ribosome assembly. The sequence is that of Small ribosomal subunit protein uS11A from Saccharomyces cerevisiae (strain ATCC 204508 / S288c) (Baker's yeast).